Reading from the N-terminus, the 376-residue chain is Alanine racemase (376 aa).

Lysine 40 acts as the Proton acceptor; specific for D-alanine in catalysis. Lysine 40 carries the N6-(pyridoxal phosphate)lysine modification. Substrate is bound at residue arginine 138. Tyrosine 270 (proton acceptor; specific for L-alanine) is an active-site residue. Substrate is bound at residue methionine 317.

This sequence belongs to the alanine racemase family. It depends on pyridoxal 5'-phosphate as a cofactor.

It carries out the reaction L-alanine = D-alanine. Its pathway is amino-acid biosynthesis; D-alanine biosynthesis; D-alanine from L-alanine: step 1/1. Catalyzes the interconversion of L-alanine and D-alanine. May also act on other amino acids. This chain is Alanine racemase (alr), found in Lactobacillus delbrueckii subsp. bulgaricus (strain ATCC BAA-365 / Lb-18).